The sequence spans 1039 residues: FERM domain-containing protein 4A (1039 aa).

One can recognise an FERM domain in the interval 20-322 (RRCQVHLLDD…SQHQFYLDRK (303 aa)). The necessary for interaction with CYTH1 stretch occupies residues 358-420 (KGKIISGSSG…KLCLREAELT (63 aa)). Over residues 366 to 382 (SGSLLSSGSQESDSSQS) the composition is skewed to low complexity. Positions 366–386 (SGSLLSSGSQESDSSQSAKKD) are disordered. A coiled-coil region spans residues 382–416 (SAKKDMLAALKSRQEALEETLRQRLEELKKLCLRE). Position 530 is a phosphoserine (S530). Residues 553 to 680 (DEDSQVTSTI…MPSTPDLRVR (128 aa)) are disordered. Over residues 571–586 (GLPPRPPSHNRPPPPQ) the composition is skewed to pro residues. The interval 579–939 (HNRPPPPQSL…QWYQRSTASH (361 aa)) is necessary for tight junction and adherens junction localization; Requires for interaction with PARD3. A phosphoserine mark is found at S604 and S615. Basic residues predominate over residues 623–638 (VKKRSSHSHSSSHKRF). 2 positions are modified to phosphoserine: S681 and S711. Disordered regions lie at residues 713–756 (ESQG…HSSS) and 772–813 (AEDS…AGGA). Low complexity predominate over residues 788 to 800 (RAAGALGSASSGS). S800, S872, and S901 each carry phosphoserine. 2 disordered regions span residues 879 to 968 (FKES…STFV) and 980 to 1039 (CKAT…STDE). Positions 896–905 (LTPSRSQILR) are enriched in polar residues. Over residues 912 to 929 (EGAHDKGAGRAAVSDELR) the composition is skewed to basic and acidic residues. Positions 946–966 (SHTSSTSSDSGSQYSTSSQST) are enriched in low complexity. Polar residues-rich tracts occupy residues 986–1000 (ALPQSQRSSTPSSEI) and 1013–1023 (TWQTGEATENS).

As to quaternary structure, interacts (via coiled-coil domain) with CYTH1 (via coiled-coil domain). Interacts with PARD3 (via coiled-coil domain). Found in a complex with PARD3, CYTH1 and FRMD4A. Interacts with CYTH2. Interacts with CYTH3.

The protein localises to the cytoplasm. The protein resides in the cytoskeleton. Its subcellular location is the cell junction. It localises to the adherens junction. It is found in the tight junction. Functionally, scaffolding protein that regulates epithelial cell polarity by connecting ARF6 activation with the PAR3 complex. Plays a redundant role with FRMD4B in epithelial polarization. May regulate MAPT secretion by activating ARF6-signaling. The polypeptide is FERM domain-containing protein 4A (Homo sapiens (Human)).